Consider the following 134-residue polypeptide: UPF0412 protein YaaI (134 aa).

An N-terminal signal peptide occupies residues 1-23 (MKSVFTLSASLAISLLLCCTAQA).

The protein belongs to the UPF0412 family.

This Escherichia coli (strain SMS-3-5 / SECEC) protein is UPF0412 protein YaaI.